The sequence spans 367 residues: PR domain zinc finger protein 12 (367 aa).

Positions 86-203 constitute an SET domain; sequence AEVIIAQSSI…PDQELLVWYG (118 aa). 3 consecutive C2H2-type zinc fingers follow at residues 243–265, 271–293, and 299–323; these read MRCV…MRIH, FVCR…VRLH, and YKCQ…SARH. A disordered region spans residues 318–337; that stretch reads QKSARHRPPSTALQAHSPAL.

The protein belongs to the class V-like SAM-binding methyltransferase superfamily. As to quaternary structure, interacts with EHMT2. Not found in adult tissues except in dorsal root ganglia.

It localises to the nucleus. In terms of biological role, transcriptional regulator necessary for the development of nociceptive neurons, playing a key role in determining the nociceptive lineage from neural crest cell progenitors. Initiates neurogenesis and activates downstream pro-neuronal transcription factors, such as NEUROD1, BRN3A, and ISL1, specifically within nociceptive neurons, while repressing non-nociceptor cell fates. Essential for the proper function of nociceptors in adults, influencing both their excitability and their gene expression, thereby impacting how these neurons respond to various pain stimuli. The sequence is that of PR domain zinc finger protein 12 (PRDM12) from Homo sapiens (Human).